A 293-amino-acid polypeptide reads, in one-letter code: 4-diphosphocytidyl-2-C-methyl-D-erythritol kinase (293 aa).

Residue K11 is part of the active site. 96-106 (PVAAGLGGGSS) contributes to the ATP binding site. Residue D138 is part of the active site.

It belongs to the GHMP kinase family. IspE subfamily.

The enzyme catalyses 4-CDP-2-C-methyl-D-erythritol + ATP = 4-CDP-2-C-methyl-D-erythritol 2-phosphate + ADP + H(+). It participates in isoprenoid biosynthesis; isopentenyl diphosphate biosynthesis via DXP pathway; isopentenyl diphosphate from 1-deoxy-D-xylulose 5-phosphate: step 3/6. In terms of biological role, catalyzes the phosphorylation of the position 2 hydroxy group of 4-diphosphocytidyl-2C-methyl-D-erythritol. This is 4-diphosphocytidyl-2-C-methyl-D-erythritol kinase from Xanthobacter autotrophicus (strain ATCC BAA-1158 / Py2).